The chain runs to 312 residues: DNA-directed RNA polymerase subunit alpha (312 aa).

The interval 1–226 (MIEFEKPIIT…EHLNLFTDLT (226 aa)) is alpha N-terminal domain (alpha-NTD). Residues 243–312 (DEKVLDRTIE…DLGLGLKNDK (70 aa)) form an alpha C-terminal domain (alpha-CTD) region.

It belongs to the RNA polymerase alpha chain family. In terms of assembly, homodimer. The RNAP catalytic core consists of 2 alpha, 1 beta, 1 beta' and 1 omega subunit. When a sigma factor is associated with the core the holoenzyme is formed, which can initiate transcription.

The catalysed reaction is RNA(n) + a ribonucleoside 5'-triphosphate = RNA(n+1) + diphosphate. DNA-dependent RNA polymerase catalyzes the transcription of DNA into RNA using the four ribonucleoside triphosphates as substrates. The protein is DNA-directed RNA polymerase subunit alpha of Streptococcus pyogenes serotype M3 (strain ATCC BAA-595 / MGAS315).